Consider the following 305-residue polypeptide: Carbamate kinase (305 aa).

It belongs to the carbamate kinase family.

Its subcellular location is the cytoplasm. The catalysed reaction is hydrogencarbonate + NH4(+) + ATP = carbamoyl phosphate + ADP + H2O + H(+). Its pathway is metabolic intermediate metabolism; carbamoyl phosphate degradation; CO(2) and NH(3) from carbamoyl phosphate: step 1/1. This chain is Carbamate kinase (arcC), found in Thermoplasma volcanium (strain ATCC 51530 / DSM 4299 / JCM 9571 / NBRC 15438 / GSS1).